A 216-amino-acid chain; its full sequence is Large ribosomal subunit protein uL3 (216 aa).

The tract at residues 119–143 (GYQGNIHKDGQSRGPMAHGSRYHRR) is disordered.

It belongs to the universal ribosomal protein uL3 family. As to quaternary structure, part of the 50S ribosomal subunit. Forms a cluster with proteins L14 and L19.

One of the primary rRNA binding proteins, it binds directly near the 3'-end of the 23S rRNA, where it nucleates assembly of the 50S subunit. The polypeptide is Large ribosomal subunit protein uL3 (Levilactobacillus brevis (strain ATCC 367 / BCRC 12310 / CIP 105137 / JCM 1170 / LMG 11437 / NCIMB 947 / NCTC 947) (Lactobacillus brevis)).